The following is a 513-amino-acid chain: ATP synthase subunit alpha (513 aa).

169 to 176 (GDRQTGKT) serves as a coordination point for ATP.

Belongs to the ATPase alpha/beta chains family. F-type ATPases have 2 components, CF(1) - the catalytic core - and CF(0) - the membrane proton channel. CF(1) has five subunits: alpha(3), beta(3), gamma(1), delta(1), epsilon(1). CF(0) has three main subunits: a(1), b(2) and c(9-12). The alpha and beta chains form an alternating ring which encloses part of the gamma chain. CF(1) is attached to CF(0) by a central stalk formed by the gamma and epsilon chains, while a peripheral stalk is formed by the delta and b chains.

The protein resides in the cell inner membrane. It catalyses the reaction ATP + H2O + 4 H(+)(in) = ADP + phosphate + 5 H(+)(out). Functionally, produces ATP from ADP in the presence of a proton gradient across the membrane. The alpha chain is a regulatory subunit. In Methylobacillus flagellatus (strain ATCC 51484 / DSM 6875 / VKM B-1610 / KT), this protein is ATP synthase subunit alpha.